Reading from the N-terminus, the 82-residue chain is Zinc finger CCCH domain-containing protein 13 (82 aa).

C3H1-type zinc fingers lie at residues 9-37 (RPGEPECSYYLRTGNCYLKQNCKYHHPKN) and 55-82 (RPGQAICPHYSRFGICRSGPTCKFDHFT).

This Arabidopsis thaliana (Mouse-ear cress) protein is Zinc finger CCCH domain-containing protein 13.